Consider the following 151-residue polypeptide: Transcriptional repressor NrdR (151 aa).

A zinc finger spans residues 3–34 (CPFCNAQDTKVIDSRLVSEGSQVRRRRSCNEC). The ATP-cone domain occupies 49-139 (PRLIKSDGRR…VYRSFKDVKE (91 aa)).

This sequence belongs to the NrdR family. Zn(2+) is required as a cofactor.

Negatively regulates transcription of bacterial ribonucleotide reductase nrd genes and operons by binding to NrdR-boxes. This Psychromonas ingrahamii (strain DSM 17664 / CCUG 51855 / 37) protein is Transcriptional repressor NrdR.